The chain runs to 164 residues: D-aminoacyl-tRNA deacylase (164 aa).

Residues Trp-72 and Phe-89 each contribute to the tRNA site. Residue Thr-90 is the Nucleophile of the active site. The C-terminal adenosine nucleotide of tRNA motif lies at 104 to 107; it reads HLAK. Residues 149–150 carry the Gly-cisPro motif, allows the protein to recognize chirality of D-amino acids motif; the sequence is GP.

It belongs to the DTD family. Homodimer.

It localises to the cytoplasm. The catalysed reaction is glycyl-tRNA(Ala) + H2O = tRNA(Ala) + glycine + H(+). The enzyme catalyses a D-aminoacyl-tRNA + H2O = a tRNA + a D-alpha-amino acid + H(+). It catalyses the reaction D-tyrosyl-tRNA(Tyr) + H2O = D-tyrosine + tRNA(Tyr). Its function is as follows. D-aminoacyl-tRNA deacylase, with no observable activity on tRNAs charged with their cognate L-amino acid. Probably acts by rejecting L-amino acids from its binding site rather than specific recognition of D-amino acids. Catalyzes the hydrolysis of D-tyrosyl-tRNA(Tyr), has no activity on correctly charged L-tyrosyl-tRNA(Tyr). Hydrolyzes correctly charged, achiral, glycyl-tRNA(Gly). Deacylates mischarged D.melanogaster and E.coli glycyl-tRNA(Ala). Probably acts via tRNA-based rather than protein-based catalysis. Acts on tRNAs only when the D-amino acid is either attached to the ribose 3'-OH or transferred to the 3'-OH from the 2'-OH through rapid transesterification. Binds a number of other D-amino acids (D-Arg, D-Glu, D-His, D-Lys, D-Ser), suggesting it may also deacylate other mischarged tRNAs. The chain is D-aminoacyl-tRNA deacylase from Plasmodium falciparum (isolate 3D7).